Here is a 469-residue protein sequence, read N- to C-terminus: Putative dipeptidase SH1171 (469 aa).

A Zn(2+)-binding site is contributed by H84. D86 is a catalytic residue. Residue D115 participates in Zn(2+) binding. E149 functions as the Proton acceptor in the catalytic mechanism. Zn(2+) contacts are provided by E150, D173, and H440.

The protein belongs to the peptidase M20A family. It depends on Zn(2+) as a cofactor.

This Staphylococcus haemolyticus (strain JCSC1435) protein is Putative dipeptidase SH1171.